The sequence spans 553 residues: Keratin, type II cytoskeletal 73 (553 aa).

Positions 1–130 are head; the sequence is MNRQFTCKSG…DPEIQKVRAQ (130 aa). Residues 131–166 are coil 1A; the sequence is EREQIKALNNKFASFIDKVRFLEQQNQVLQTKWELL. One can recognise an IF rod domain in the interval 131–444; the sequence is EREQIKALNN…KLLEGEECRM (314 aa). Residues 167–185 form a linker 1 region; sequence QQLDLSNCRRNLEPVYEAH. Residues 186–277 form a coil 1B region; it reads ISSLQKQLDS…CLYEGEITQM (92 aa). A linker 12 region spans residues 278–301; sequence QSHISDTSVVLSMDNNRNLDLDSI. Residues 302 to 440 form a coil 2 region; it reads IAEVRAQYED…ATYRKLLEGE (139 aa). The tail stretch occupies residues 441 to 539; that stretch reads ECRMSGEHTN…LGSPSKKTMR (99 aa).

Belongs to the intermediate filament family. In terms of assembly, heterotetramer of two type I and two type II keratins.

In terms of biological role, has a role in hair formation. Specific component of keratin intermediate filaments in the inner root sheath (IRS) of the hair follicle. The protein is Keratin, type II cytoskeletal 73 (Krt73) of Rattus norvegicus (Rat).